Here is a 159-residue protein sequence, read N- to C-terminus: UPF0756 membrane protein PTH_1668 (159 aa).

A run of 4 helical transmembrane segments spans residues 15–37, 61–81, 117–137, and 138–158; these read ILIT…SSCI, LGLV…KLTI, PEII…LRGT, and PCGP…ASLF.

It belongs to the UPF0756 family.

It is found in the cell membrane. The chain is UPF0756 membrane protein PTH_1668 from Pelotomaculum thermopropionicum (strain DSM 13744 / JCM 10971 / SI).